We begin with the raw amino-acid sequence, 455 residues long: F-box/FBD/LRR-repeat protein At3g51530 (455 aa).

The interval 1-26 (MKNSERFSAAKPLMEQGGKSSRKPGF) is disordered. An F-box domain is found at 29 to 75 (EDRISELPEVLLLQILSSLPTKLVISTSVLSKRWLSLWKMVQRLEFE). LRR repeat units lie at residues 80-106 (IYDF…HLKV), 155-182 (ETLK…HLLS), 183-208 (VVYK…VLRR), 227-257 (TLLL…GIES), 277-302 (IRNV…SLDL), and 325-351 (THKV…KLID). In terms of domain architecture, FBD spans 370–417 (KWNQPKYVPECLETFMWRNCNWGREEEKEVATYILRNARQLKKATFST).

This is F-box/FBD/LRR-repeat protein At3g51530 from Arabidopsis thaliana (Mouse-ear cress).